The sequence spans 261 residues: tRNA pseudouridine synthase A (261 aa).

Residue Asp53 is the Nucleophile of the active site. Residue Tyr111 participates in substrate binding.

Belongs to the tRNA pseudouridine synthase TruA family. Homodimer.

The catalysed reaction is uridine(38/39/40) in tRNA = pseudouridine(38/39/40) in tRNA. Formation of pseudouridine at positions 38, 39 and 40 in the anticodon stem and loop of transfer RNAs. This Shouchella clausii (strain KSM-K16) (Alkalihalobacillus clausii) protein is tRNA pseudouridine synthase A.